Here is a 577-residue protein sequence, read N- to C-terminus: Cleavage stimulation factor subunit 2 (577 aa).

Ser14 bears the Phosphoserine mark. In terms of domain architecture, RRM spans 16–94 (RSVFVGNIPY…RALRVDNAAS (79 aa)). The interval 108–248 (APVIESPYGE…VNGAPPLMQA (141 aa)) is interactions with CSTF3 and SYMPK. Lys189 is covalently cross-linked (Glycyl lysine isopeptide (Lys-Gly) (interchain with G-Cter in SUMO2)). Residues 206 to 243 (QPVHGAGPGSGSNVSMNQQNPQAPQAQSLGGMHVNGAP) form a disordered region. Positions 222–232 (NQQNPQAPQAQ) are enriched in low complexity. The residue at position 308 (Arg308) is an Omega-N-methylarginine. The segment at 340 to 409 (EVEPRGYLGP…DGRGGRDPRG (70 aa)) is disordered. Positions 360 to 373 (PGHESRGPPPHELR) are enriched in basic and acidic residues. One copy of the 1; approximate repeat lies at 410-414 (IDARG). A 12 X 5 AA tandem repeats of M-E-A-R-[AG] region spans residues 410–469 (IDARGMEARAMEARGLDARGLEARAMEARAMEARAMEARAMEARAMEVRGMEARGMDTRG). 2 consecutive repeat copies span residues 415–419 (MEARA) and 420–424 (MEARG). The 4; approximate repeat unit spans residues 425 to 429 (LDARG). One copy of the 5; approximate repeat lies at 430–434 (LEARA). 4 consecutive repeat copies span residues 435 to 439 (MEARA), 440 to 444 (MEARA), 445 to 449 (MEARA), and 450 to 454 (MEARA). Residues 455-459 (MEVRG) form a 10; approximate repeat. Repeat unit 11 spans residues 460-464 (MEARG). The 12; approximate repeat unit spans residues 465-469 (MDTRG). Residues Arg468 and Arg475 each carry the omega-N-methylarginine modification. The interval 508-532 (GMQGASIQGGSQPGGFSPGQNQVTP) is disordered. The segment at 514-577 (IQGGSQPGGF…EQIQKSTGAP (64 aa)) is interaction with RPO2TC1. Phosphoserine occurs at positions 518 and 524.

The CSTF complex is composed of CSTF1 (50 kDa subunit), CSTF2 (64 kDa subunit) and CSTF3 (77 kDa subunit). CSTF2 directly interacts with CSTF3, SYMPK and RPO2TC1. Interacts with HSF1 in heat-stressed cells. Interacts with CPSF2, CPSF3 and FIP1L1. Interacts with DDX1.

The protein resides in the nucleus. One of the multiple factors required for polyadenylation and 3'-end cleavage of mammalian pre-mRNAs. This subunit is directly involved in the binding to pre-mRNAs. The polypeptide is Cleavage stimulation factor subunit 2 (CSTF2) (Homo sapiens (Human)).